Here is a 991-residue protein sequence, read N- to C-terminus: Bone morphogenetic protein 1 (991 aa).

The signal sequence occupies residues 1–25; sequence MPGVARPPLPLLSLPLLLLLLLLPR. The propeptide occupies 26-125; sequence AGRPLDLADY…RWRGRPRSRR (100 aa). The interval 86 to 131 is disordered; that stretch reads ARRPSIKAAGNSSALGGQGTSGQPQRESRGRWRGRPRSRRAATSRP. Residues 95–110 show a composition bias toward polar residues; the sequence is GNSSALGGQGTSGQPQ. Asn-96 carries an N-linked (GlcNAc...) asparagine glycan. A compositionally biased stretch (basic residues) spans 116–127; sequence RWRGRPRSRRAA. The Peptidase M12A domain occupies 126-325; it reads AATSRPERVW…AQARKLYKCP (200 aa). N-linked (GlcNAc...) asparagine glycosylation is present at Asn-147. Cystine bridges form between Cys-168–Cys-324, Cys-188–Cys-210, Cys-190–Cys-191, and Cys-327–Cys-353. Residue His-218 participates in Zn(2+) binding. Residue Glu-219 is part of the active site. Zn(2+) contacts are provided by His-222 and His-228. CUB domains are found at residues 327–439 and 440–551; these read CGET…YEAI and CGGD…NFFK. Asn-337 and Asn-368 each carry an N-linked (GlcNAc...) asparagine glycan. 15 disulfide bridges follow: Cys-380–Cys-402, Cys-440–Cys-466, Cys-493–Cys-515, Cys-556–Cys-568, Cys-564–Cys-577, Cys-579–Cys-592, Cys-596–Cys-622, Cys-649–Cys-671, Cys-712–Cys-723, Cys-719–Cys-732, Cys-734–Cys-747, Cys-752–Cys-778, Cys-805–Cys-827, Cys-865–Cys-895, and Cys-922–Cys-944. The EGF-like 1; calcium-binding domain maps to 552–593; it reads EVDECSRPNRGGCEQRCLNTLGSYKCSCDPGYELAPDKRRCE. Positions 596-707 constitute a CUB 3 domain; sequence CGGFLTKLNG…KKGFKAHFFS (112 aa). N-linked (GlcNAc...) asparagine glycosylation occurs at Asn-604. One can recognise an EGF-like 2; calcium-binding domain in the interval 708–748; the sequence is DKDECSKDNGGCQQDCVNTFGSYECQCRSGFVLHDNKHDCK. 2 CUB domains span residues 752–864 and 865–981; these read CEHK…HSTE and CGGQ…YTST. Omega-N-methylarginine occurs at positions 939 and 942.

In terms of assembly, interacts with POSTN, the interaction promotes deposition on the extracellular matrix. Requires Zn(2+) as cofactor. As to expression, at high levels in embryonic maternal deciduum and floor plate region of the neural tube. Less in developing membranous and endochondral bone, submucosa of intestine, dermis of skin and the mesenchyme of spleen and lung.

The protein localises to the golgi apparatus. The protein resides in the trans-Golgi network. It localises to the secreted. Its subcellular location is the extracellular space. It is found in the extracellular matrix. The catalysed reaction is Cleavage of the C-terminal propeptide at Ala-|-Asp in type I and II procollagens and at Arg-|-Asp in type III.. Its activity is regulated as follows. Activity is increased by the procollagen C-endopeptidase enhancer protein. In terms of biological role, metalloprotease that plays key roles in regulating the formation of the extracellular matrix (ECM) via processing of various precursor proteins into mature functional enzymes or structural proteins. Thereby participates in several developmental and physiological processes such as cartilage and bone formation, muscle growth and homeostasis, wound healing and tissue repair. Roles in ECM formation include cleavage of the C-terminal propeptides from procollagens such as procollagen I, II and III or the proteolytic activation of the enzyme lysyl oxidase LOX, necessary to formation of covalent cross-links in collagen and elastic fibers. Additional substrates include matricellular thrombospondin-1/THBS1 whose cleavage leads to cell adhesion disruption and TGF-beta activation. This Mus musculus (Mouse) protein is Bone morphogenetic protein 1 (Bmp1).